The primary structure comprises 349 residues: MAKAGDKSSSSGKKSLKRKAAAEELQEAAGAGDVATESGVQPPKAAAFPPGFSISEIKNKERRHLMFTRWKQQQRKEKLAAKKKLKKEREALGDKAPPKPVPKTIDNQRVYDETTVDPNDEEVAYDEATDEFASYFNKQTSPKILITTSDRPHGRTVRLCEQLSTVIPNSHVYYRRGLALKKIIPQCIARDFTDLIVINEDRKTPNGLILSHLPNGPTAHFKMSSVRLRKEIKRRGKDPTEHIPEIILNNFTTRLGHSIGRMFASLFPHNPQFIGRQVATFHNQRDYIFFRFHRYIFRSEKKVGIQELGPRFTLKLRSLQKGTFDSKYGEYEWVHKPREMDTSRRKFHL.

The interval 1–105 (MAKAGDKSSS…APPKPVPKTI (105 aa)) is disordered. The span at 87–97 (KEREALGDKAP) shows a compositional bias: basic and acidic residues. Residues 142–325 (PKILITTSDR…LRSLQKGTFD (184 aa)) form the Brix domain. Residues 303-320 (VGIQELGPRFTLKLRSLQ) are RNA-binding.

The protein localises to the nucleus. It localises to the nucleolus. Its function is as follows. May be required for ribosome biogenesis. In Pongo abelii (Sumatran orangutan), this protein is Ribosome production factor 1 (RPF1).